The following is a 365-amino-acid chain: MQTLKVDLGERSYPIYIGEGLLDQPELLAPHIAGRQVAIVSNETVAPLYLERLSKTLGAYSVLPVVLPDGEKYKNWETLQLVFDALLSARHDRRTTVVALGGGVIGDMAGFAAACYQRGVDFIQVPTTLLSQVDSSVGGKTGINHPLGKNMVGAFYQPNAVLIDTTSLKTLPQRELSAGLAEIIKYGLICDEPFLGWLEDNMQALRALEPVALTEAIRRSCAAKAAVVGADERESGVRATLNLGHTFGHAIETHMGYGVWLHGEAVAAGTVMALEMSMRLGWIDQPARDRGIRLLQDAGLPVVPPQEMTPAHFMEHMAVDKKVLDGRLRLVLLRQMGEAVVTDDYPKEILQATLAADYRAIVAQL.

NAD(+)-binding positions include 69 to 74 (DGEKYK), 103 to 107 (GVIGD), 127 to 128 (TT), K140, and K149. Zn(2+) contacts are provided by E182, H245, and H262.

It belongs to the sugar phosphate cyclases superfamily. Dehydroquinate synthase family. It depends on Co(2+) as a cofactor. The cofactor is Zn(2+). NAD(+) is required as a cofactor.

The protein localises to the cytoplasm. The enzyme catalyses 7-phospho-2-dehydro-3-deoxy-D-arabino-heptonate = 3-dehydroquinate + phosphate. The protein operates within metabolic intermediate biosynthesis; chorismate biosynthesis; chorismate from D-erythrose 4-phosphate and phosphoenolpyruvate: step 2/7. Functionally, catalyzes the conversion of 3-deoxy-D-arabino-heptulosonate 7-phosphate (DAHP) to dehydroquinate (DHQ). The sequence is that of 3-dehydroquinate synthase from Pseudomonas entomophila (strain L48).